Here is a 288-residue protein sequence, read N- to C-terminus: Diaminopimelate epimerase (288 aa).

Positions 13, 46, and 66 each coordinate substrate. Cysteine 75 functions as the Proton donor in the catalytic mechanism. Residues glycine 76–asparagine 77, asparagine 166, asparagine 199, and glutamate 217–arginine 218 each bind substrate. The active-site Proton acceptor is cysteine 226. Residue glycine 227 to threonine 228 coordinates substrate.

This sequence belongs to the diaminopimelate epimerase family. As to quaternary structure, homodimer.

Its subcellular location is the cytoplasm. The catalysed reaction is (2S,6S)-2,6-diaminopimelate = meso-2,6-diaminopimelate. Its pathway is amino-acid biosynthesis; L-lysine biosynthesis via DAP pathway; DL-2,6-diaminopimelate from LL-2,6-diaminopimelate: step 1/1. In terms of biological role, catalyzes the stereoinversion of LL-2,6-diaminopimelate (L,L-DAP) to meso-diaminopimelate (meso-DAP), a precursor of L-lysine and an essential component of the bacterial peptidoglycan. The sequence is that of Diaminopimelate epimerase from Cupriavidus taiwanensis (strain DSM 17343 / BCRC 17206 / CCUG 44338 / CIP 107171 / LMG 19424 / R1) (Ralstonia taiwanensis (strain LMG 19424)).